Reading from the N-terminus, the 982-residue chain is Protein lin-10 (982 aa).

The span at 1–16 (MSSEAVAQATAATTSP) shows a compositional bias: polar residues. Disordered stretches follow at residues 1–55 (MSSE…MIPP), 119–228 (QPAL…RTDS), 269–327 (TVAD…STVP), 432–511 (FAQQ…GTDD), and 525–593 (QREQ…SKET). Over residues 33 to 44 (KGGGAGGGGGGE) the composition is skewed to gly residues. Positions 119 to 134 (QPALQQPRPSSQASSS) are enriched in low complexity. Polar residues-rich tracts occupy residues 143-156 (RQTAGSVVSSNVSP) and 169-190 (ETSGVVQNNDELLVPTSTSSDV). Residues 211–228 (GEEKSEEKRKLSGDRTDS) are compositionally biased toward basic and acidic residues. Positions 301–318 (SLNQLRSSFNLPDDSTTV) are enriched in polar residues. 2 stretches are compositionally biased toward low complexity: residues 432-445 (FAQQQIAQSAAPTP) and 454-464 (PSTSSGPSGAL). Polar residues predominate over residues 490–501 (NGTSTSTTNGAQ). Positions 539-550 (QEAATAAQEAAE) are enriched in low complexity. Positions 577–593 (GAERRGSVDKKKNSKET) are enriched in basic and acidic residues. Positions 604-788 (GVLFRARYLG…VLNSQELLGD (185 aa)) constitute a PID domain. PDZ domains are found at residues 801–886 (EVVV…TVVS) and 892–968 (EVRI…MPTS).

As to quaternary structure, interacts (via N-terminus) with egl-9 isoform e (via catalytic domain); the interaction regulates its trafficking; the interaction is direct. Interacts with rab-6.2 (in GTP-bound form). In terms of processing, phosphorylated on multiple Ser and Thr residues by cdk-5 which regulates its localization. May be hydroxylated by egl-9 isoform e on multiple Pro residues which may prevent phosphorylation by cdk-5. Expressed in vulval epithelial cells and neurons.

The protein resides in the golgi apparatus. It localises to the golgi stack membrane. Its subcellular location is the trans-Golgi network membrane. It is found in the cytoplasm. The protein localises to the synapse. The protein resides in the perikaryon. Functionally, required specifically for the determination of 3 vulval precursor cell fates P5.p, P6.p and P7.p during late second and early third larval stages; required for basolateral localization of receptor tyrosine kinase let-23. Could have a general but redundant role in development, functioning in diverse cell lineages to control cell fates. Regulates the trafficking of the glr-1 subunit of AMPA-type glutamate receptors (AMPRs) in the ventral nerve cord. This may be partly through interacting with the small GTPase rab-6.2 in its active GTP-bound state. The protein is Protein lin-10 of Caenorhabditis elegans.